A 335-amino-acid polypeptide reads, in one-letter code: Nucleoid-associated protein CKO_00588 (335 aa).

Belongs to the YejK family.

The protein localises to the cytoplasm. Its subcellular location is the nucleoid. This chain is Nucleoid-associated protein CKO_00588, found in Citrobacter koseri (strain ATCC BAA-895 / CDC 4225-83 / SGSC4696).